Here is a 488-residue protein sequence, read N- to C-terminus: Transmembrane protein 39A-B (488 aa).

Residues Asn-31 and Asn-39 are each glycosylated (N-linked (GlcNAc...) asparagine). 3 consecutive transmembrane segments (helical) span residues 72 to 92 (GLVFEFLFFIYLLVTLFTQYI), 110 to 130 (TSLNFHLIDYHLAAFITVMLA), and 155 to 175 (LIIGRLVLLTLCGWIFCWTTV). Residue Asn-180 is glycosylated (N-linked (GlcNAc...) asparagine). The helical transmembrane segment at 182 to 202 (SVLNLLFLGYPFGVYVPLCCF) threads the bilayer. N-linked (GlcNAc...) asparagine glycosylation occurs at Asn-206. Transmembrane regions (helical) follow at residues 287-307 (EVLFNSLFSAYYVAFLPLCFV), 319-339 (CEHLIMVWINAFVMLSTQLLP), 420-440 (LLNLLLVIEGSLVLYQLYSLL), and 446-466 (NHTLSIALILFCNYYVLFKLL).

The protein belongs to the TMEM39 family.

The protein localises to the membrane. The polypeptide is Transmembrane protein 39A-B (tmem39a-b) (Xenopus laevis (African clawed frog)).